The chain runs to 1594 residues: DTTAGPDTTSAPQPTTPTGLCGFIRRQPLPEDNLNALNFTLSNFTVERWCAREPEFKQFLAQSVSDRCFGNGSCGVESGIPEVFIFPGFPVVNSPLLVRFYVRLQVNSSVSVVLERTVLTSILDRVLENLTAEFGVQFSVDGGFTEWSPFGPCSTSCGPGIQVRFRNCTNPPPINNGSDCVGPRNETRPCNNGSCPIDGNFTQWEIWSGCSVTCGKGVQRRFRSCTKPPPSNGGQDCIGDRLETRECLKPPCPVDGNFTEWGAWSKCSQTCENGTQVRFRSCTNPPPAFGGRDCMGPTNETRACNDGPCPGRLYPHGLLANDNLLPNRDAFSNFCGRINLFNQEIPFFIRRHRRVYICRNGMLKFRRSAIIRYPQRFPGPRNEDFLFRFRNSYIIAPYWLTISDDAFEQPINTSKVFYRIYSKFSRRDRDVLDRANHDVRRFQTSVPQFEAQWVLVVTWLQLYPPTFPGVRLSNSFQVVLITDGQHTFSLFNYPENGIQWSTPTGRLFPNLYPPGSGLPVAGYNAGDRNLPFFNLPNSGTVNIQNIDQMMGNTNLTGVWFFRLEMNSILSLAGKKCNEWSRQRTSRISPTLPPCPCLFGQATLDKRYFVDYNQTVSKRGNGTICAYSLPSGSRRWVQQCCYTDLPSGGKVLSSSPPESGGPYLIALPGSPVISDADGHEFCCSSSQCSLYYRLRPPRSCFGYTLRRRGLIFGDPHFTTLDNTTYTFNGLGEYTIVAIDDEAFEMQARTARTSGRGLGTAFSAAVAKERGTATVEARINQKAGDLEVLIAGKPFNISTITTTGTNIPDGNITLVRDSNGSITALFPSNIAFTFTDVEGTLAIAFEAPDDFKNRTKGLLGTWNDDPSDDFVTPDGTLVPADAAPRRIHYEFGLKWQINASQSLFTYSDLESPSTFVDLSYIPMFIDNITWVNDSFRYEAVKACGNNTQCLFDAAVTEDTSYGINTKKLEDNNNEINKELANFPPKILGPKVINATIGQAIEVKITAEHNSSDFFVFTVNNLPDVIILANTSRYLLIRWTPTSLQKVEPVFIVTDSHNSSSELRPLILLCPCANGSRCIDDEEVSNQRNKGFSFLLLSCTCPAGLTGQYCQHKIDACVENNQPCFPGVKCTDVSSSSNGTRYQCDPCPKGYSGNGSICEDIDECSDANVSKCDHSCINLPGSYVCDCNQGFSLEGDGTSCKDINECLISNDCMQNCTNLPGGRTCSCLDGFQIDPKDQTACVPISRCDTFKVGCQQVCVMDRGQPKCACHKGYSLNADGRTCDDINECTTHRHKCSQICHNLDGSYTCSCQPGFNLSPDQTTCEDIDECGLINEAHCEGSLEICINTMGSFRCECQDGFHRVNDTCQESLPSTNGPTGTTGIVASSVSIALTIKDADLHEWQARLSRMFMDAVAKVVVDYCKGNANGNCYGNAVIAKRYTRSISGTSLVARVHILNDFPETRDANLLVAFYVMLSTNQGEVYVMNKDSLLRALQESQTELSWAIKKEISEIRALKVDDESPTPYETREDGLEMIWLLVGVSVAVAVPLMIVIVILYREYRRIAKQRRKTNNFDLRQWSGARERTIYSGFTNSKSARL.

Residues 1–1530 (DTTAGPDTTS…YETREDGLEM (1530 aa)) are Extracellular-facing. 3 consecutive TSP type-1 domains span residues 141-196 (DGGF…GSCP), 198-253 (DGNF…PPCP), and 255-310 (DGNF…GPCP). Disulfide bonds link C153-C190, C157-C195, C168-C180, C210-C247, C214-C252, C225-C237, C267-C304, C271-C309, and C282-C294. The NIDO domain maps to 400–566 (LTISDDAFEQ…GVWFFRLEMN (167 aa)). Residues 568–706 (ILSLAGKKCN…RSCFGYTLRR (139 aa)) enclose the AMOP domain. Residues 706-901 (RRGLIFGDPH…KWQINASQSL (196 aa)) enclose the VWFD domain. EGF-like domains follow at residues 1063 to 1108 (LILL…QYCQ) and 1110 to 1156 (KIDA…SICE). 14 cysteine pairs are disulfide-bonded: C1067–C1075, C1069–C1096, C1098–C1107, C1114–C1127, C1121–C1141, C1144–C1155, C1161–C1173, C1169–C1182, C1285–C1296, C1292–C1305, C1307–C1320, C1326–C1341, C1334–C1350, and C1352–C1363. Residues 1157-1191 (DIDECSDANVSKCDHSCINLPGSYVCDCNQGFSLE) enclose the EGF-like 3; calcium-binding domain. The 41-residue stretch at 1281-1321 (DINECTTHRHKCSQICHNLDGSYTCSCQPGFNLSPDQTTCE) folds into the EGF-like 4; calcium-binding domain. Residues 1322–1364 (DIDECGLINEAHCEGSLEICINTMGSFRCECQDGFHRVNDTCQ) enclose the EGF-like 5; calcium-binding domain. A helical transmembrane segment spans residues 1531–1551 (IWLLVGVSVAVAVPLMIVIVI). Residues 1552–1593 (LYREYRRIAKQRRKTNNFDLRQWSGARERTIYSGFTNSKSAR) lie on the Cytoplasmic side of the membrane.

In terms of tissue distribution, component of the acid-insoluble and acid-soluble organic matrix of the aragonitic skeleton (at protein level).

Its subcellular location is the membrane. The sequence is that of Mucin-like protein from Acropora millepora (Staghorn coral).